We begin with the raw amino-acid sequence, 471 residues long: 3-isopropylmalate dehydratase large subunit (471 aa).

The [4Fe-4S] cluster site is built by cysteine 349, cysteine 409, and cysteine 412.

It belongs to the aconitase/IPM isomerase family. LeuC type 1 subfamily. As to quaternary structure, heterodimer of LeuC and LeuD. Requires [4Fe-4S] cluster as cofactor.

The catalysed reaction is (2R,3S)-3-isopropylmalate = (2S)-2-isopropylmalate. Its pathway is amino-acid biosynthesis; L-leucine biosynthesis; L-leucine from 3-methyl-2-oxobutanoate: step 2/4. Functionally, catalyzes the isomerization between 2-isopropylmalate and 3-isopropylmalate, via the formation of 2-isopropylmaleate. The polypeptide is 3-isopropylmalate dehydratase large subunit (Aliivibrio salmonicida (strain LFI1238) (Vibrio salmonicida (strain LFI1238))).